The following is a 310-amino-acid chain: Membrane protein insertase YidC 2 (310 aa).

Positions 1–23 are cleaved as a signal peptide; that stretch reads MKKTLKRILFSSLSLSMLLLLTG. A lipid anchor (N-palmitoyl cysteine) is attached at Cys-24. Cys-24 is lipidated: S-diacylglycerol cysteine. 5 helical membrane passes run 33 to 53, 58 to 78, 135 to 155, 180 to 200, and 219 to 239; these read PYGVIWNTLGVPMANLITYFA, LGFGVAIIIVTVIVRVVILPL, FGGIGCLPLLIQMPFFSAIFF, LTVIIAILYFVQSWLSMQGVP, and VFMSISLPASVALYWFIGGIF. The interval 266–310 is disordered; that stretch reads NPPKAYKANNARKDVTNSTKATESNQAIITSKKTNRNAGKQKRRG. Over residues 281 to 297 the composition is skewed to polar residues; that stretch reads TNSTKATESNQAIITSK. Positions 298-310 are enriched in basic residues; that stretch reads KTNRNAGKQKRRG.

It belongs to the OXA1/ALB3/YidC family. Type 2 subfamily.

It localises to the cell membrane. Its function is as follows. Required for the insertion and/or proper folding and/or complex formation of integral membrane proteins into the membrane. Involved in integration of membrane proteins that insert both dependently and independently of the Sec translocase complex, as well as at least some lipoproteins. The protein is Membrane protein insertase YidC 2 of Streptococcus agalactiae serotype V (strain ATCC BAA-611 / 2603 V/R).